The sequence spans 511 residues: Exodeoxyribonuclease 7 large subunit (511 aa).

It belongs to the XseA family. In terms of assembly, heterooligomer composed of large and small subunits.

The protein localises to the cytoplasm. It carries out the reaction Exonucleolytic cleavage in either 5'- to 3'- or 3'- to 5'-direction to yield nucleoside 5'-phosphates.. In terms of biological role, bidirectionally degrades single-stranded DNA into large acid-insoluble oligonucleotides, which are then degraded further into small acid-soluble oligonucleotides. The polypeptide is Exodeoxyribonuclease 7 large subunit (Brucella melitensis biotype 2 (strain ATCC 23457)).